Reading from the N-terminus, the 205-residue chain is Probable ADP-ribosylation factor At2g15310 (205 aa).

The N-myristoyl glycine moiety is linked to residue Gly-2. Residues Gly-24–Thr-31, Asp-67–Gln-71, and Asn-126–Asp-129 each bind GTP.

The protein belongs to the small GTPase superfamily. Arf family.

The protein localises to the golgi apparatus. Functionally, GTP-binding protein involved in protein trafficking; may modulate vesicle budding and uncoating within the Golgi apparatus. In Arabidopsis thaliana (Mouse-ear cress), this protein is Probable ADP-ribosylation factor At2g15310.